A 206-amino-acid polypeptide reads, in one-letter code: Orotate phosphoribosyltransferase (206 aa).

5-phospho-alpha-D-ribose 1-diphosphate is bound by residues R114, K115, K118, H120, and 141–149 (EDVVTTGQS). 2 residues coordinate orotate: T145 and R173.

The protein belongs to the purine/pyrimidine phosphoribosyltransferase family. PyrE subfamily. In terms of assembly, homodimer. Mg(2+) serves as cofactor.

The catalysed reaction is orotidine 5'-phosphate + diphosphate = orotate + 5-phospho-alpha-D-ribose 1-diphosphate. It participates in pyrimidine metabolism; UMP biosynthesis via de novo pathway; UMP from orotate: step 1/2. Its function is as follows. Catalyzes the transfer of a ribosyl phosphate group from 5-phosphoribose 1-diphosphate to orotate, leading to the formation of orotidine monophosphate (OMP). This chain is Orotate phosphoribosyltransferase, found in Nostoc sp. (strain PCC 7120 / SAG 25.82 / UTEX 2576).